A 67-amino-acid polypeptide reads, in one-letter code: Large ribosomal subunit protein uL29 (67 aa).

Belongs to the universal ribosomal protein uL29 family.

The polypeptide is Large ribosomal subunit protein uL29 (Desulfitobacterium hafniense (strain Y51)).